Consider the following 363-residue polypeptide: Peroxin-36 (363 aa).

Topologically, residues 1–193 are cytoplasmic; it reads MSNLEKQIRL…ESFFINSFEQ (193 aa). 2 disordered regions span residues 71-114 and 128-157; these read QNHQ…DTST and TNSN…SKSG. Positions 97-114 are enriched in low complexity; it reads VDSNSDSSSSETLIDTST. Residues 194–213 traverse the membrane as a helical segment; it reads LIALFDNFYFLSSLIGFNTS. Residues 214–232 are Peroxisomal-facing; sequence NSNSKITRLLRNFIKQASK. Residues 233 to 250 traverse the membrane as a helical segment; that stretch reads IWLVIIFLTVKNLFIRMI. Over 251 to 363 the chain is Cytoplasmic; that stretch reads KLNRTEKKVK…SSDDIIDEYA (113 aa).

Its subcellular location is the peroxisome membrane. Controls peroxisome morphology and abundance under conditions of peroxisome proliferation such as oleate and methanol media. Has additional function(s), which is not present in its functional homologs such as Saccharomyces cerevisea PEX34 or human PEX16. The sequence is that of Peroxin-36 from Komagataella phaffii (strain GS115 / ATCC 20864) (Yeast).